A 512-amino-acid polypeptide reads, in one-letter code: MTDSHTAGPFIAAIDQGTTSSRCIVFDRDGRIVSVDQKEHEQIFPKPGWVEHDATEIWTNVQEVVAGAVEKAGITRDDIKAIGITNQRETTLVWDKNTGEPVHNAIVWQDTRTDALCKELGRNVGQDRFRRETGLPLASYFAGPKARWLLDNVDGLRERAEAGDLLFGTMDTWVIWNLTGGVNGGKHVTDVTNASRTMLMNLHTMAWDEKIAESIGVPMQMLPEIRSSAEVYGEITGGRLGELLGGIPVASALGDQQAALFGQTCFSEGETKSTYGTGTFMVMNTGDKLINSYSGLLTTVGYKIGDQDTVYALEGSIAVTGSLVQWMRDQMGLISTAAEIETLALTVEDNGGAYFVPAFSGLFAPYWRSDARGVIAGLTRYVTKAHLARAVLEATAWQTREIADAMTKDSGVELTALKVDGGMTSNNLLMQTLADFVDAPVVRPMVAETTCLGAAYAAGLAVGFWNSTDDLRANWRRAAEWTPRMDADIRDREYKSWLKAVERTMGWLEDEE.

Position 18 (Thr-18) interacts with ADP. ATP contacts are provided by Thr-18, Thr-19, and Ser-20. Residue Thr-18 coordinates sn-glycerol 3-phosphate. Arg-22 contacts ADP. Arg-88, Glu-89, Tyr-140, and Asp-255 together coordinate sn-glycerol 3-phosphate. Positions 88, 89, 140, 255, and 256 each coordinate glycerol. Positions 277 and 321 each coordinate ADP. 4 residues coordinate ATP: Thr-277, Gly-321, Gln-325, and Gly-422. Positions 422 and 426 each coordinate ADP.

The protein belongs to the FGGY kinase family.

It carries out the reaction glycerol + ATP = sn-glycerol 3-phosphate + ADP + H(+). It functions in the pathway polyol metabolism; glycerol degradation via glycerol kinase pathway; sn-glycerol 3-phosphate from glycerol: step 1/1. Inhibited by fructose 1,6-bisphosphate (FBP). Its function is as follows. Key enzyme in the regulation of glycerol uptake and metabolism. Catalyzes the phosphorylation of glycerol to yield sn-glycerol 3-phosphate. The sequence is that of Glycerol kinase 2 from Streptomyces coelicolor (strain ATCC BAA-471 / A3(2) / M145).